Reading from the N-terminus, the 89-residue chain is NADH-ubiquinone oxidoreductase chain 4L (89 aa).

3 helical membrane-spanning segments follow: residues 1-21 (MNLS…NRKN), 22-42 (IILM…LILI), and 55-75 (FAIY…GILV).

It belongs to the complex I subunit 4L family.

The protein resides in the mitochondrion membrane. It carries out the reaction a ubiquinone + NADH + 5 H(+)(in) = a ubiquinol + NAD(+) + 4 H(+)(out). In terms of biological role, core subunit of the mitochondrial membrane respiratory chain NADH dehydrogenase (Complex I) that is believed to belong to the minimal assembly required for catalysis. Complex I functions in the transfer of electrons from NADH to the respiratory chain. The immediate electron acceptor for the enzyme is believed to be ubiquinone. The sequence is that of NADH-ubiquinone oxidoreductase chain 4L (ND4L) from Trichophyton rubrum (Athlete's foot fungus).